The chain runs to 658 residues: Threonine--tRNA ligase (658 aa).

The TGS domain maps to 1-64; the sequence is MSNTVSLQFP…GASGKVEIIT (64 aa). Residues 246–548 form a catalytic region; that stretch reads DHRRLGREMD…LIENFAGHMP (303 aa). Positions 343, 394, and 525 each coordinate Zn(2+).

Belongs to the class-II aminoacyl-tRNA synthetase family. Homodimer. It depends on Zn(2+) as a cofactor.

Its subcellular location is the cytoplasm. The catalysed reaction is tRNA(Thr) + L-threonine + ATP = L-threonyl-tRNA(Thr) + AMP + diphosphate + H(+). Catalyzes the attachment of threonine to tRNA(Thr) in a two-step reaction: L-threonine is first activated by ATP to form Thr-AMP and then transferred to the acceptor end of tRNA(Thr). Also edits incorrectly charged L-seryl-tRNA(Thr). This chain is Threonine--tRNA ligase, found in Brucella melitensis biotype 2 (strain ATCC 23457).